Here is a 406-residue protein sequence, read N- to C-terminus: Immediate early response gene 5-like protein (406 aa).

Disordered stretches follow at residues 166 to 195 (QPPH…APAA) and 216 to 235 (AAPS…PSSS). The span at 182 to 193 (QPGPAPLPPPAP) shows a compositional bias: pro residues.

The protein belongs to the IER family.

This is Immediate early response gene 5-like protein (Ier5l) from Mus musculus (Mouse).